A 911-amino-acid polypeptide reads, in one-letter code: DNA mismatch repair protein MutS (911 aa).

The tract at residues 1 to 95 (MALQGNLFGD…PWSHHSQVTP (95 aa)) is disordered. The span at 23–42 (KRQDEPDQLDDHELTQDAKQ) shows a compositional bias: basic and acidic residues. Residue 727-734 (GPNASGKS) participates in ATP binding.

Belongs to the DNA mismatch repair MutS family.

Functionally, this protein is involved in the repair of mismatches in DNA. It is possible that it carries out the mismatch recognition step. This protein has a weak ATPase activity. The sequence is that of DNA mismatch repair protein MutS from Synechococcus sp. (strain CC9311).